Consider the following 73-residue polypeptide: Large ribosomal subunit protein uL29 (73 aa).

The tract at residues Met1–Asp20 is disordered.

The protein belongs to the universal ribosomal protein uL29 family.

In Protochlamydia amoebophila (strain UWE25), this protein is Large ribosomal subunit protein uL29.